Reading from the N-terminus, the 477-residue chain is Glutamyl-tRNA reductase (477 aa).

Residues 49–52, Ser-109, 114–116, and Gln-120 each bind substrate; these read TCNR and EQQ. Cys-50 acts as the Nucleophile in catalysis. 189–194 lines the NADP(+) pocket; the sequence is GAGAMG.

It belongs to the glutamyl-tRNA reductase family. As to quaternary structure, homodimer.

It carries out the reaction (S)-4-amino-5-oxopentanoate + tRNA(Glu) + NADP(+) = L-glutamyl-tRNA(Glu) + NADPH + H(+). Its pathway is porphyrin-containing compound metabolism; protoporphyrin-IX biosynthesis; 5-aminolevulinate from L-glutamyl-tRNA(Glu): step 1/2. Catalyzes the NADPH-dependent reduction of glutamyl-tRNA(Glu) to glutamate 1-semialdehyde (GSA). In Nocardia farcinica (strain IFM 10152), this protein is Glutamyl-tRNA reductase.